The sequence spans 316 residues: 1-aminocyclopropane-1-carboxylate oxidase 4 (316 aa).

One can recognise a Fe2OG dioxygenase domain in the interval 153–253 (PNFGTKVSNY…RMSLASFYNP (101 aa)). The Fe cation site is built by His-177, Asp-179, and His-234.

This sequence belongs to the iron/ascorbate-dependent oxidoreductase family. The cofactor is Fe cation. Expressed in all of the floral organs examined apart from the sepals.

The catalysed reaction is 1-aminocyclopropane-1-carboxylate + L-ascorbate + O2 = ethene + L-dehydroascorbate + hydrogen cyanide + CO2 + 2 H2O. Its pathway is alkene biosynthesis; ethylene biosynthesis via S-adenosyl-L-methionine; ethylene from S-adenosyl-L-methionine: step 2/2. The protein is 1-aminocyclopropane-1-carboxylate oxidase 4 (ACO4) of Solanum lycopersicum (Tomato).